Consider the following 445-residue polypeptide: Tubulin beta-2A chain (445 aa).

Residues 1–4 (MREI) carry the MREI motif motif. A GTP-binding site is contributed by Q11. Residue S40 is modified to Phosphoserine. An N6-acetyllysine; alternate modification is found at K58. An N6-succinyllysine; alternate modification is found at K58. A Glycyl lysine isopeptide (Lys-Gly) (interchain with G-Cter in ubiquitin); alternate cross-link involves residue K58. 5 residues coordinate GTP: E69, S138, G142, T143, and G144. E69 is a Mg(2+) binding site. S172 carries the post-translational modification Phosphoserine; by CDK1. GTP contacts are provided by N204 and N226. A phosphothreonine mark is found at T285 and T290. R318 carries the omega-N-methylarginine modification. K324 participates in a covalent cross-link: Glycyl lysine isopeptide (Lys-Gly) (interchain with G-Cter in ubiquitin). The tract at residues 422-445 (YQQYQDATADEQGEFEEEEGEDEA) is disordered. Residues 429-445 (TADEQGEFEEEEGEDEA) show a composition bias toward acidic residues. Position 438 is a 5-glutamyl polyglutamate (E438).

This sequence belongs to the tubulin family. As to quaternary structure, interacts with ZNRF1. Part of a complex composed at least of ASH2L, EMSY, HCFC1, HSPA8, CCAR2, MATR3, MKI67, RBBP5, TUBB2A, WDR5 and ZNF335; this complex may have a histone H3-specific methyltransferase activity. Dimer of alpha and beta chains. A typical microtubule is a hollow water-filled tube with an outer diameter of 25 nm and an inner diameter of 15 nM. Alpha-beta heterodimers associate head-to-tail to form protofilaments running lengthwise along the microtubule wall with the beta-tubulin subunit facing the microtubule plus end conferring a structural polarity. Microtubules usually have 13 protofilaments but different protofilament numbers can be found in some organisms and specialized cells. Mg(2+) is required as a cofactor. Post-translationally, some glutamate residues at the C-terminus are polyglutamylated, resulting in polyglutamate chains on the gamma-carboxyl group. Polyglutamylation plays a key role in microtubule severing by spastin (SPAST). SPAST preferentially recognizes and acts on microtubules decorated with short polyglutamate tails: severing activity by SPAST increases as the number of glutamates per tubulin rises from one to eight, but decreases beyond this glutamylation threshold. Glutamylation is also involved in cilia motility. In terms of processing, some glutamate residues at the C-terminus are monoglycylated but not polyglycylated due to the absence of functional TTLL10 in human. Monoglycylation is mainly limited to tubulin incorporated into cilia and flagella axonemes, which is required for their stability and maintenance. Flagella glycylation controls sperm motility. Both polyglutamylation and monoglycylation can coexist on the same protein on adjacent residues, and lowering glycylation levels increases polyglutamylation, and reciprocally. Phosphorylated on Ser-172 by CDK1 during the cell cycle, from metaphase to telophase, but not in interphase. This phosphorylation inhibits tubulin incorporation into microtubules. In terms of tissue distribution, high expression in brain, where it represents 30% of all beta-tubulins.

The protein localises to the cytoplasm. Its subcellular location is the cytoskeleton. Functionally, tubulin is the major constituent of microtubules, a cylinder consisting of laterally associated linear protofilaments composed of alpha- and beta-tubulin heterodimers. Microtubules grow by the addition of GTP-tubulin dimers to the microtubule end, where a stabilizing cap forms. Below the cap, tubulin dimers are in GDP-bound state, owing to GTPase activity of alpha-tubulin. This Homo sapiens (Human) protein is Tubulin beta-2A chain (TUBB2A).